A 174-amino-acid polypeptide reads, in one-letter code: MTIILGIDPGSRVTGYGLIKESDRKIAYIDSGCIRTSNDVELSHKLLQIYDGICELMDHYSPTEVAIEQIFMHNNPNSALKLGHARGVAMVAAASHRAKICEYSAREIKQSVVGYGAAEKDQVSHMVVELLQLNRAPQKDAADALAIAICHSHMRNGLSKLIGSRGTKRRRMRL.

Catalysis depends on residues aspartate 8, glutamate 68, and aspartate 140. Residues aspartate 8, glutamate 68, and aspartate 140 each contribute to the Mg(2+) site.

It belongs to the RuvC family. In terms of assembly, homodimer which binds Holliday junction (HJ) DNA. The HJ becomes 2-fold symmetrical on binding to RuvC with unstacked arms; it has a different conformation from HJ DNA in complex with RuvA. In the full resolvosome a probable DNA-RuvA(4)-RuvB(12)-RuvC(2) complex forms which resolves the HJ. Requires Mg(2+) as cofactor.

The protein resides in the cytoplasm. It carries out the reaction Endonucleolytic cleavage at a junction such as a reciprocal single-stranded crossover between two homologous DNA duplexes (Holliday junction).. The RuvA-RuvB-RuvC complex processes Holliday junction (HJ) DNA during genetic recombination and DNA repair. Endonuclease that resolves HJ intermediates. Cleaves cruciform DNA by making single-stranded nicks across the HJ at symmetrical positions within the homologous arms, yielding a 5'-phosphate and a 3'-hydroxyl group; requires a central core of homology in the junction. The consensus cleavage sequence is 5'-(A/T)TT(C/G)-3'. Cleavage occurs on the 3'-side of the TT dinucleotide at the point of strand exchange. HJ branch migration catalyzed by RuvA-RuvB allows RuvC to scan DNA until it finds its consensus sequence, where it cleaves and resolves the cruciform DNA. The polypeptide is Crossover junction endodeoxyribonuclease RuvC (Legionella pneumophila (strain Paris)).